Here is a 679-residue protein sequence, read N- to C-terminus: DNA ligase (679 aa).

NAD(+) is bound by residues 36-40 (DAQYD), 85-86 (SL), and Glu-116. The active-site N6-AMP-lysine intermediate is Lys-118. Residues Arg-139, Glu-174, Lys-300, and Lys-324 each coordinate NAD(+). 4 residues coordinate Zn(2+): Cys-418, Cys-421, Cys-436, and Cys-441. The BRCT domain occupies 600–679 (EGGGPLNGKV…NEFRELTGRK (80 aa)).

The protein belongs to the NAD-dependent DNA ligase family. LigA subfamily. Mg(2+) is required as a cofactor. The cofactor is Mn(2+).

The enzyme catalyses NAD(+) + (deoxyribonucleotide)n-3'-hydroxyl + 5'-phospho-(deoxyribonucleotide)m = (deoxyribonucleotide)n+m + AMP + beta-nicotinamide D-nucleotide.. Functionally, DNA ligase that catalyzes the formation of phosphodiester linkages between 5'-phosphoryl and 3'-hydroxyl groups in double-stranded DNA using NAD as a coenzyme and as the energy source for the reaction. It is essential for DNA replication and repair of damaged DNA. This Pelotomaculum thermopropionicum (strain DSM 13744 / JCM 10971 / SI) protein is DNA ligase.